A 462-amino-acid chain; its full sequence is Notoamide biosynthesis cluster protein O' (462 aa).

3 consecutive transmembrane segments (helical) span residues 16–36 (IFNVSVVAVCAFIAPGLWAAM), 55–75 (AVIFCLQVVVCVFGSSLIAKI), and 79–99 (WAFALGMVGFPIYASSVYCNV). N102 is a glycosylation site (N-linked (GlcNAc...) asparagine). Transmembrane regions (helical) follow at residues 104–124 (SWYIMLACVIDGICSGIFWLT), 143–163 (AYWLASRIMGQMIGGAVTLGV), 173–193 (ISVQTYLVFISIQAIGPFVAA), and 233–253 (ILLLLPMMFQSVFSEAFFSTY). A glycan (N-linked (GlcNAc...) asparagine) is linked at N254. The next 4 membrane-spanning stretches (helical) occupy residues 265 to 285 (LSSLVASTCVIISNFLLGFFL), 297 to 317 (MAAFIIIYAFELSLYVYAMVV), 343 to 363 (VYILMLVGFNLMYDYLYWLIG), and 404 to 424 (AVAVNLSFFAACIVPSAFVIY). Residues 443–462 (LQTSGEGSHDIMDANGKSDD) are disordered. Basic and acidic residues predominate over residues 449–462 (GSHDIMDANGKSDD).

It belongs to the unc-93 family.

Its subcellular location is the membrane. Part of the gene cluster that mediates the biosynthesis of notoamide, a fungal indole alkaloid that belongs to a family of natural products containing a characteristic bicyclo[2.2.2]diazaoctane core. The first step of notoamide biosynthesis involves coupling of L-proline and L-tryptophan by the bimodular NRPS notE', to produce cyclo-L-tryptophan-L-proline called brevianamide F. The reverse prenyltransferase notF' then acts as a deoxybrevianamide E synthase and converts brevianamide F to deoxybrevianamide E via reverse prenylation at C-2 of the indole ring leading to the bicyclo[2.2.2]diazaoctane core. Deoxybrevianamide E is further hydroxylated at C-6 of the indole ring, likely catalyzed by the cytochrome P450 monooxygenase notG', to yield 6-hydroxy-deoxybrevianamide E. 6-hydroxy-deoxybrevianamide E is a specific substrate of the prenyltransferase notC' for normal prenylation at C-7 to produce 6-hydroxy-7-prenyl-deoxybrevianamide, also called notoamide S. As the proposed pivotal branching point in notoamide biosynthesis, notoamide S can be diverted to notoamide E through an oxidative pyran ring closure putatively catalyzed by either notH' cytochrome P450 monooxygenase or the notD' FAD-linked oxidoreductase. This step would be followed by an indole 2,3-epoxidation-initiated pinacol-like rearrangement catalyzed by the notB' FAD-dependent monooxygenase leading to the formation of notoamide C and notoamide D. On the other hand notoamide S is converted to notoamide T by notH' (or notD'), a bifunctional oxidase that also functions as the intramolecular Diels-Alderase responsible for generation of (-)-notoamide T. To generate antipodal (+)-notoaminide T, notH (or notD) in Aspergillus strain MF297-2 is expected to catalyze a Diels-Alder reaction leading to the opposite stereochemistry. The remaining oxidoreductase notD' (or notH') likely catalyzes the oxidative pyran ring formation to yield (-)-stephacidin A. The FAD-dependent monooxygenase notI' is highly similar to notB' and is predicted to catalyze a similar conversion from (-)-stephacidin A to (+)-notoamide B via the 2,3-epoxidation of (-)-stephacidin A followed by a pinacol-type rearrangement. Finally, it remains unclear which enzyme could be responsible for the final hydroxylation steps leading to notoamide A and sclerotiamide. The function of notO' in the notoamide biosynthesis has not been determined yet. The protein is Notoamide biosynthesis cluster protein O' of Aspergillus versicolor.